The primary structure comprises 154 residues: Myoglobin (154 aa).

Positions 2–148 (GLSDQEWQHV…FRNDMASKYK (147 aa)) constitute a Globin domain. Nitrite is bound at residue His65. Position 65 (His65) interacts with O2. His94 is a binding site for heme b.

The protein belongs to the globin family. Monomeric.

It localises to the cytoplasm. Its subcellular location is the sarcoplasm. The enzyme catalyses Fe(III)-heme b-[protein] + nitric oxide + H2O = Fe(II)-heme b-[protein] + nitrite + 2 H(+). It carries out the reaction H2O2 + AH2 = A + 2 H2O. Functionally, monomeric heme protein which primary function is to store oxygen and facilitate its diffusion within muscle tissues. Reversibly binds oxygen through a pentacoordinated heme iron and enables its timely and efficient release as needed during periods of heightened demand. Depending on the oxidative conditions of tissues and cells, and in addition to its ability to bind oxygen, it also has a nitrite reductase activity whereby it regulates the production of bioactive nitric oxide. Under stress conditions, like hypoxia and anoxia, it also protects cells against reactive oxygen species thanks to its pseudoperoxidase activity. In Uria lomvia (Thick-billed murre), this protein is Myoglobin (MB).